We begin with the raw amino-acid sequence, 27 residues long: Phospholipase A2 2 (27 aa).

Residues 1–27 form a disordered region; the sequence is FMKVIDPGTKWCGPGNKAADDTDNGKN. 3 residues coordinate Ca(2+): tryptophan 11, glycine 13, and glycine 15. Over residues 18–27 the composition is skewed to basic and acidic residues; the sequence is AADDTDNGKN.

Belongs to the phospholipase A2 family. Ca(2+) serves as cofactor. As to expression, expressed by the venom gland.

It is found in the secreted. It carries out the reaction a 1,2-diacyl-sn-glycero-3-phosphocholine + H2O = a 1-acyl-sn-glycero-3-phosphocholine + a fatty acid + H(+). PLA2 catalyzes the calcium-dependent hydrolysis of the 2-acyl groups in 3-sn-phosphoglycerides. In Opisthacanthus cayaporum (South American scorpion), this protein is Phospholipase A2 2.